Reading from the N-terminus, the 112-residue chain is ATP synthase epsilon chain (112 aa).

Belongs to the ATPase epsilon chain family. As to quaternary structure, F-type ATPases have 2 components, CF(1) - the catalytic core - and CF(0) - the membrane proton channel. CF(1) has five subunits: alpha(3), beta(3), gamma(1), delta(1), epsilon(1). CF(0) has three main subunits: a, b and c.

It is found in the cell inner membrane. In terms of biological role, produces ATP from ADP in the presence of a proton gradient across the membrane. The polypeptide is ATP synthase epsilon chain (Rickettsia rickettsii (strain Sheila Smith)).